The chain runs to 129 residues: Small ribosomal subunit protein uS12 (129 aa).

The protein belongs to the universal ribosomal protein uS12 family. As to quaternary structure, part of the 30S ribosomal subunit. Contacts proteins S8 and S17. May interact with IF1 in the 30S initiation complex.

In terms of biological role, with S4 and S5 plays an important role in translational accuracy. Functionally, interacts with and stabilizes bases of the 16S rRNA that are involved in tRNA selection in the A site and with the mRNA backbone. Located at the interface of the 30S and 50S subunits, it traverses the body of the 30S subunit contacting proteins on the other side and probably holding the rRNA structure together. The combined cluster of proteins S8, S12 and S17 appears to hold together the shoulder and platform of the 30S subunit. This is Small ribosomal subunit protein uS12 from Rickettsia typhi (strain ATCC VR-144 / Wilmington).